The primary structure comprises 24 residues: Flavin reductase (NADPH) (24 aa).

NADP(+) is bound by residues Gly9, Thr11, Gly12, and Thr14.

This sequence belongs to the BLVRB family. Monomer. As to expression, detected in erythrocytes (at protein level).

Its subcellular location is the cytoplasm. The catalysed reaction is reduced riboflavin + NADP(+) = riboflavin + NADPH + 2 H(+). It catalyses the reaction bilirubin IXbeta + NADP(+) = biliverdin IXbeta + NADPH + H(+). The enzyme catalyses FMNH2 + NAD(+) = FMN + NADH + 2 H(+). It carries out the reaction FMNH2 + NADP(+) = FMN + NADPH + 2 H(+). The catalysed reaction is S-nitroso-CoA + L-cysteinyl-[protein] = S-nitroso-L-cysteinyl-[protein] + CoA. It catalyses the reaction L-cysteinyl-[SCAN] + S-nitroso-CoA = S-nitroso-L-cysteinyl-[SCAN] + CoA. The enzyme catalyses S-nitroso-L-cysteinyl-[SCAN] + L-cysteinyl-[protein] = L-cysteinyl-[SCAN] + S-nitroso-L-cysteinyl-[protein]. Its function is as follows. Enzyme that can both act as a NAD(P)H-dependent reductase and a S-nitroso-CoA-dependent nitrosyltransferase. Promotes fetal heme degradation during development. Also expressed in adult tissues, where it acts as a regulator of hematopoiesis, intermediary metabolism (glutaminolysis, glycolysis, TCA cycle and pentose phosphate pathway) and insulin signaling. Has a broad specificity oxidoreductase activity by catalyzing the NAD(P)H-dependent reduction of a variety of flavins, such as riboflavin, FAD or FMN, biliverdins, methemoglobin and PQQ (pyrroloquinoline quinone). Contributes to fetal heme catabolism by catalyzing reduction of biliverdin IXbeta into bilirubin IXbeta in the liver. Biliverdin IXbeta, which constitutes the major heme catabolite in the fetus is not present in adult. Does not reduce bilirubin IXalpha. Can also reduce the complexed Fe(3+) iron to Fe(2+) in the presence of FMN and NADPH. Acts as a protein nitrosyltransferase by catalyzing nitrosylation of cysteine residues of target proteins, such as HMOX2, INSR and IRS1. S-nitroso-CoA-dependent nitrosyltransferase activity is mediated via a 'ping-pong' mechanism: BLVRB first associates with both S-nitroso-CoA and protein substrate, nitric oxide group is then transferred from S-nitroso-CoA to Cys residues of BLVRB and from S-nitroso-BLVRB to the protein substrate. Inhibits insulin signaling by mediating nitrosylation of INSR and IRS1, leading to their inhibition. This is Flavin reductase (NADPH) (BLVRB) from Aquarana catesbeiana (American bullfrog).